The primary structure comprises 219 residues: Elongation factor Ts, chloroplastic (219 aa).

Belongs to the EF-Ts family.

The protein localises to the plastid. The protein resides in the chloroplast. In terms of biological role, associates with the EF-Tu.GDP complex and induces the exchange of GDP to GTP. It remains bound to the aminoacyl-tRNA.EF-Tu.GTP complex up to the GTP hydrolysis stage on the ribosome. The sequence is that of Elongation factor Ts, chloroplastic (tsf) from Rhodomonas salina (Cryptomonas salina).